Here is a 3411-residue protein sequence, read N- to C-terminus: MSGRKAQGKTLGVNMVRRGVRSLSNKIKQKTKQIGNRPGPSRGVQGFIFFFLFNILTGKKITAHLKRLWKMLDPRQGLAVLRKVKRVVASLMRGLSSRKRRSHDVLTVQFLILGMLLMTGGVTLVRKNRWLLLNVTSEDLGKTFSVGTGNCTTNILEAKYWCPDSMEYNCPNLSPREEPDDIDCWCYGVENVRVAYGKCDSAGRSRRSRRAIDLPTHENHGLKTRQEKWMTGRMGERQLQKIERWFVRNPFFAVTALTIAYLVGSNMTQRVVIALLVLAVGPAYSAHCIGITDRDFIEGVHGGTWVSATLEQDKCVTVMAPDKPSLDISLETVAIDRPAEVRKVCYNAVLTHVKINDKCPSTGEAHLAEENEGDNACKRTYSDRGWGNGCGLFGKGSIVACAKFTCAKSMSLFEVDQTKIQYVIRAQLHVGAKQENWNTDIKTLKFDALSGSQEVEFIGYGKATLECQVQTAVDFGNSYIAEMETESWIVDRQWAQDLTLPWQSGSGGVWREMHHLVEFEPPHAATIRVLALGNQEGSLKTALTGAMRVTKDTNDNNLYKLHGGHVSCRVKLSALTLKGTSYKICTDKMFFVKNPTDTGHGTVVMQVKVSKGAPCRIPVIVADDLTAAINKGILVTVNPIASTNDDEVLIEVNPPFGDSYIIVGRGDSRLTYQWHKEGSSIGKLFTQTMKGVERLAVMGDTAWDFSSAGGFFTSVGKGIHTVFGSAFQGLFGGLNWITKVIMGAVLIWVGINTRNMTMSMSMILVGVIMMFLSLGVGADQGCAINFGKRELKCGDGIFIFRDSDDWLNKYSYYPEDPVKLASIVKASFEEGKCGLNSVDSLEHEMWRSRADEINAIFEENEVDISVVVQDPKNVYQRGTHPFSRIRDGLQYGWKTWGKNLVFSPGRKNGSFIIDGKSRKECPFSNRVWNSFQIEEFGTGVFTTRVYMDAVFEYTIDCDGSILGAAVNGKKSAHGSPTFWMGSHEVNGTWMIHTLEALDYKECEWPLTHTIGTSVEESEMFMPRSIGGPVSSHNHIPGYKVQTNGPWMQVPLEVKREACPGTSVIIDGNCDGRGKSTRSTTDSGKVIPEWCCRSCTMPPVSFHGSDGCWYPMEIRPRKTHESHLVRSWVTAGEIHAVPFGLVSMMIAMEVVLRKRQGPKQMLVGGVVLLGAMLVGQVTLLDLLKLTVAVGLHFHEMNNGGDAMYMALIAAFSIRPGLLIGFGLRTLWSPRERLVLTLGAAMVEIALGGVMGGLWKYLNAVSLCILTINAVASRKASNTILPLMALLTPVTMAEVRLAAMFFCAVVIIGVLHQNFKDTSMQKTIPLVALTLTSYLGLTQPFLGLCAFLATRIFGRRSIPVNEALAAAGLVGVLAGLAFQEMENFLGPIAVGGLLMMLVSVAGRVDGLELKKLGEVSWEEEAEISGSSARYDVALSEQGEFKLLSEEKVPWDQVVMTSLALVGAALHPFALLLVLAGWLFHVRGARRSGDVLWDIPTPKIIEECEHLEDGIYGIFQSTFLGASQRGVGVAQGGVFHTMWHVTRGAFLVRNGKKLIPSWASVKEDLVAYGGSWKLEGRWDGEEEVQLIAAVPGKNVVNVQTKPSLFKVRNGGEIGAVALDYPSGTSGSPIVNRNGEVIGLYGNGILVGDNSFVSAISQTEVKEEGKEELQEIPTMLKKGMTTVLDFHPGAGKTRRFLPQILAECARRRLRTLVLAPTRVVLSEMKEAFHGLDVKFHTQAFSAHGSGREVIDAMCHATLTYRMLEPTRVVNWEVIIMDEAHFLDPASIAARGWAAHRARANESATILMTATPPGTSDEFPHSNGEIEDVQTDIPSEPWNTGHDWILADKRPTAWFLPSIRAANVMAASLRKAGKSVVVLNRKTFEREYPTIKQKKPDFILATDIAEMGANLCVERVLDCRTAFKPVLVDEGRKVAIKGPLRISASSAAQRRGRIGRNPNRDGDSYYYSEPTSENNAHHVCWLEASMLLDNMEVRGGMVAPLYGVEGTKTPVSPGEMRLRDDQRKVFRELVRNCDLPVWLSWQVAKAGLKTNDRKWCFEGPEEHEILNDSGETVKCRAPGGAKKPLRPRWCDERVSSDQSALSEFIKFAEGRRGAAEVLVVLSELPDFLAKKGGEAMDTISVFLHSEEGSRAYRNALSMMPEAMTIVMLFILAGLLTSGMVIFFMSPKGISRMSMAMGTMAGCGYLMFLGGVKPTHISYVMLIFFVLMVVVIPEPGQQRSIQDNQVAYLIIGILTLVSAVAANELGMLEKTKEDLFGKKNLIPSSASPWSWPDLDLKPGAAWTVYVGIVTMLSPMLHHWIKVEYGNLSLSGIAQSASVLSFMDKGIPFMKMNISVIMLLVSGWNSITVMPLLCGIGCAMLHWSLILPGIKAQQSKLAQRRVFHGVAENPVVDGNPTVDIEEAPEMPALYEKKLALYLLLALSLASVAMCRTPFSLAEGIVLASAALGPLIEGNTSLLWNGPMAVSMTGVMRGNHYAFVGVMYNLWKMKTGRRGSANGKTLGEVWKRELNLLDKRQFELYKRTDIVEVDRDTARRHLAEGKVDTGVAVSRGTAKLRWFHERGYVKLEGRVIDLGCGRGGWCYYAAAQKEVSGVKGFTLGRDGHEKPMNVQSLGWNIITFKDKTDIHRLEPVKCDTLLCDIGESSSSSVTEGERTVRVLDTVEKWLACGVDNFCVKVLAPYMPDVLEKLELLQRRFGGTVIRNPLSRNSTHEMYYVSGARSNVTFTVNQTSRLLMRRMRRPTGKVTLEADVILPIGTRSVETDKGPLDKEAIEERVERIKSEYMTSWFYDNDNPYRTWHYCGSYVTKTSGSAASMVNGVIKILTYPWDRIEEVTRMAMTDTTPFGQQRVFKEKVDTRAKDPPAGTRKIMKVVNRWLFRHLAREKNPRLCTKEEFIAKVRSHAAIGAYLEEQEQWKTANEAVQDPKFWELVDEERKLHQQGRCRTCVYNMMGKREKKLSEFGKAKGSRAIWYMWLGARYLEFEALGFLNEDHWASRENSGGGVEGIGLQYLGYVIRDLAAMDGGGFYADDTAGWDTRITEADLDDEQEILNYMSPHHKKLAQAVMEMTYKNKVVKVLRPAPGGKAYMDVISRRDQRGSGQVVTYALNTITNLKVQLIRMAEAEMVIHHQHVQDCDESVLTRLEAWLTEHGCDRLKRMAVSGDDCVVRPIDDRFGLALSHLNAMSKVRKDISEWQPSKGWNDWENVPFCSHHFHELQLKDGRRIVVPCREQDELIGRGRVSPGNGWMIKETACLSKAYANMWSLMYFHKRDMRLLSLAVSSAVPTSWVPQGRTTWSIHGKGEWMTTEDMLEVWNRVWITNNPHMQDKTMVKKWRDVPYLTKRQDKLCGSLIGMTNRATWASHIHLVIHRIRTLIGQEKYTDYLTVMDRYSVDADLQLGELI.

Over 1 to 104 (MSGRKAQGKT…LSSRKRRSHD (104 aa)) the chain is Cytoplasmic. The segment at 38–72 (PGPSRGVQGFIFFFLFNILTGKKITAHLKRLWKML) is hydrophobic; homodimerization of capsid protein C. The propeptide at 102–121 (SHDVLTVQFLILGMLLMTGG) is ER anchor for the capsid protein C, removed in mature form by serine protease NS3. Residues 105-125 (VLTVQFLILGMLLMTGGVTLV) form a helical membrane-spanning segment. Residues 126 to 244 (RKNRWLLLNV…GERQLQKIER (119 aa)) lie on the Extracellular side of the membrane. Residues Asn-134 and Asn-150 are each glycosylated (N-linked (GlcNAc...) asparagine; by host). The helical transmembrane segment at 245–265 (WFVRNPFFAVTALTIAYLVGS) threads the bilayer. At 266–270 (NMTQR) the chain is on the cytoplasmic side. A helical membrane pass occupies residues 271 to 285 (VVIALLVLAVGPAYS). Residues 286-730 (AHCIGITDRD…TVFGSAFQGL (445 aa)) lie on the Extracellular side of the membrane. 8 disulfides stabilise this stretch: Cys-288-Cys-315, Cys-345-Cys-401, Cys-345-Cys-406, Cys-359-Cys-390, Cys-377-Cys-401, Cys-377-Cys-406, Cys-467-Cys-568, and Cys-585-Cys-615. Residues 383-396 (DRGWGNGCGLFGKG) are fusion peptide. Residues 731 to 751 (FGGLNWITKVIMGAVLIWVGI) traverse the membrane as a helical segment. The Extracellular segment spans residues 752–757 (NTRNMT). A helical membrane pass occupies residues 758-778 (MSMSMILVGVIMMFLSLGVGA). Over 779–1132 (DQGCAINFGK…LVRSWVTAGE (354 aa)) the chain is Extracellular. 6 disulfide bridges follow: Cys-782-Cys-793, Cys-833-Cys-921, Cys-957-Cys-1002, Cys-1058-Cys-1107, Cys-1069-Cys-1091, and Cys-1090-Cys-1094. N-linked (GlcNAc...) asparagine; by host glycans are attached at residues Asn-908 and Asn-986. A helical membrane pass occupies residues 1133–1153 (IHAVPFGLVSMMIAMEVVLRK). Residues 1154–1201 (RQGPKQMLVGGVVLLGAMLVGQVTLLDLLKLTVAVGLHFHEMNNGGDA) lie on the Cytoplasmic side of the membrane. Residues 1202-1222 (MYMALIAAFSIRPGLLIGFGL) form a helical membrane-spanning segment. Residues 1223-1287 (RTLWSPRERL…ILPLMALLTP (65 aa)) are Lumenal-facing. The chain crosses the membrane as a helical span at residues 1288 to 1308 (VTMAEVRLAAMFFCAVVIIGV). At 1309–1355 (LHQNFKDTSMQKTIPLVALTLTSYLGLTQPFLGLCAFLATRIFGRRS) the chain is on the cytoplasmic side. A helical membrane pass occupies residues 1356–1376 (IPVNEALAAAGLVGVLAGLAF). Topologically, residues 1377 to 1378 (QE) are lumenal. The helical transmembrane segment at 1379–1399 (MENFLGPIAVGGLLMMLVSVA) threads the bilayer. Over 1400 to 1456 (GRVDGLELKKLGEVSWEEEAEISGSSARYDVALSEQGEFKLLSEEKVPWDQVVMTSL) the chain is Cytoplasmic. The tract at residues 1407–1446 (LKKLGEVSWEEEAEISGSSARYDVALSEQGEFKLLSEEKV) is interacts with and activates NS3 protease. The segment at residues 1457-1477 (ALVGAALHPFALLLVLAGWLF) is an intramembrane region (helical). Residues 1478 to 2157 (HVRGARRSGD…RNALSMMPEA (680 aa)) are Cytoplasmic-facing. One can recognise a Peptidase S7 domain in the interval 1485 to 1665 (SGDVLWDIPT…EVKEEGKEEL (181 aa)). Residues His-1537, Asp-1561, and Ser-1622 each act as charge relay system; for serine protease NS3 activity in the active site. Residues 1669–1825 (PTMLKKGMTT…HSNGEIEDVQ (157 aa)) enclose the Helicase ATP-binding domain. Residues 1673-1676 (KKGM) form an important for RNA-binding region. 1682-1689 (FHPGAGKT) lines the ATP pocket. A DEAH box motif is present at residues 1773–1776 (DEAH). In terms of domain architecture, Helicase C-terminal spans 1820-1997 (EIEDVQTDIP…VRGGMVAPLY (178 aa)). N6-acetyllysine; by host is present on Lys-1877. The helical transmembrane segment at 2158 to 2178 (MTIVMLFILAGLLTSGMVIFF) threads the bilayer. Over 2179-2186 (MSPKGISR) the chain is Lumenal. Positions 2187 to 2207 (MSMAMGTMAGCGYLMFLGGVK) form an intramembrane region, helical. Residues 2208 to 2209 (PT) are Lumenal-facing. Residues 2210-2230 (HISYVMLIFFVLMVVVIPEPG) traverse the membrane as a helical segment. The Cytoplasmic segment spans residues 2231–2241 (QQRSIQDNQVA). Residues 2242-2262 (YLIIGILTLVSAVAANELGML) form a helical membrane-spanning segment. Over 2263–2293 (EKTKEDLFGKKNLIPSSASPWSWPDLDLKPG) the chain is Lumenal. An intramembrane region (helical) is located at residues 2294 to 2314 (AAWTVYVGIVTMLSPMLHHWI). Residues 2315–2360 (KVEYGNLSLSGIAQSASVLSFMDKGIPFMKMNISVIMLLVSGWNSI) are Lumenal-facing. Residues 2361 to 2381 (TVMPLLCGIGCAMLHWSLILP) form a helical membrane-spanning segment. The Cytoplasmic segment spans residues 2382-2421 (GIKAQQSKLAQRRVFHGVAENPVVDGNPTVDIEEAPEMPA). A helical membrane pass occupies residues 2422-2442 (LYEKKLALYLLLALSLASVAM). Residues 2443-2445 (CRT) are Lumenal-facing. The chain crosses the membrane as a helical span at residues 2446 to 2466 (PFSLAEGIVLASAALGPLIEG). Residues 2467 to 3411 (NTSLLWNGPM…DADLQLGELI (945 aa)) are Cytoplasmic-facing. Residues 2507 to 2771 (GSANGKTLGE…DVILPIGTRS (265 aa)) form the mRNA cap 0-1 NS5-type MT domain. Ser-2562 provides a ligand contact to S-adenosyl-L-methionine. Ser-2562 carries the post-translational modification Phosphoserine. Residue Lys-2567 is the For 2'-O-MTase activity of the active site. Residues Gly-2592, Trp-2593, Thr-2610, Leu-2611, Asp-2637, and Ile-2638 each coordinate S-adenosyl-L-methionine. Catalysis depends on Asp-2652, which acts as the For 2'-O-MTase activity. Ile-2653 serves as a coordination point for S-adenosyl-L-methionine. Catalysis depends on for 2'-O-MTase activity residues Lys-2688 and Glu-2724. Tyr-2726 serves as a coordination point for S-adenosyl-L-methionine. Residues 2878 to 2911 (RKIMKVVNRWLFRHLAREKNPRLCTKEEFIAKVR) carry the Nuclear localization signal motif. Zn(2+)-binding residues include Glu-2945, His-2949, Cys-2954, and Cys-2957. The 153-residue stretch at 3035–3187 (GGFYADDTAG…RPIDDRFGLA (153 aa)) folds into the RdRp catalytic domain. Zn(2+) is bound by residues His-3222, Cys-3238, and Cys-3357.

This sequence in the N-terminal section; belongs to the class I-like SAM-binding methyltransferase superfamily. mRNA cap 0-1 NS5-type methyltransferase family. As to quaternary structure, homodimer. Interacts (via N-terminus) with host EXOC1 (via C-terminus); this interaction results in EXOC1 degradation through the proteasome degradation pathway. In terms of assembly, forms heterodimers with envelope protein E in the endoplasmic reticulum and Golgi. Homodimer; in the endoplasmic reticulum and Golgi. Interacts with protein prM. Interacts with non-structural protein 1. As to quaternary structure, homodimer; Homohexamer when secreted. Interacts with envelope protein E. In terms of assembly, interacts (via N-terminus) with serine protease NS3. Forms a heterodimer with serine protease NS3. May form homooligomers. As to quaternary structure, forms a heterodimer with NS2B. Interacts with non-structural protein 2A (via N-terminus). Interacts with NS4B. Interacts with unphosphorylated RNA-directed RNA polymerase NS5; this interaction stimulates RNA-directed RNA polymerase NS5 guanylyltransferase activity. NS3 interacts with host PDCD6IP; this interaction contributes to virion release. In terms of assembly, interacts with serine protease NS3. Homodimer. Interacts with host STAT2; this interaction prevents the establishment of cellular antiviral state. Interacts with serine protease NS3. Interacts with host TRIM23; this interaction leads to NS5 ubiquitination. Specific enzymatic cleavages in vivo yield mature proteins. The nascent capsid protein C contains a C-terminal hydrophobic domain that act as a signal sequence for translocation of prM into the lumen of the ER. Mature capsid protein C is cleaved at a site upstream of this hydrophobic domain by NS3. prM is cleaved in post-Golgi vesicles by a host furin, releasing the mature small envelope protein M, and peptide pr. Non-structural protein 2A-alpha, a C-terminally truncated form of non-structural protein 2A, results from partial cleavage by NS3. Specific enzymatic cleavages in vivo yield mature proteins peptide 2K acts as a signal sequence and is removed from the N-terminus of NS4B by the host signal peptidase in the ER lumen. Signal cleavage at the 2K-4B site requires a prior NS3 protease-mediated cleavage at the 4A-2K site. In terms of processing, cleaved in post-Golgi vesicles by a host furin, releasing the mature small envelope protein M, and peptide pr. This cleavage is incomplete as up to 30% of viral particles still carry uncleaved prM. Post-translationally, N-glycosylated. N-glycosylated. The excreted form is glycosylated and this is required for efficient secretion of the protein from infected cells. In terms of processing, polyubiquitinated; ubiquitination is probably mediated by host TRIM23 and is prerequisite for NS5-STAT2 interaction. NS5 is not ISGylated or sumoylated. Post-translationally, acetylated by host KAT5. Acetylation modulates NS3 RNA-binding and unwinding activities and plays an important positive role for viral replication. Phosphorylated on serines residues. This phosphorylation may trigger NS5 nuclear localization.

It localises to the virion. The protein resides in the host nucleus. The protein localises to the host cytoplasm. Its subcellular location is the host perinuclear region. It is found in the secreted. It localises to the virion membrane. The protein resides in the host endoplasmic reticulum membrane. The catalysed reaction is Selective hydrolysis of -Xaa-Xaa-|-Yaa- bonds in which each of the Xaa can be either Arg or Lys and Yaa can be either Ser or Ala.. The enzyme catalyses RNA(n) + a ribonucleoside 5'-triphosphate = RNA(n+1) + diphosphate. It catalyses the reaction a ribonucleoside 5'-triphosphate + H2O = a ribonucleoside 5'-diphosphate + phosphate + H(+). It carries out the reaction ATP + H2O = ADP + phosphate + H(+). The catalysed reaction is a 5'-end (5'-triphosphoguanosine)-ribonucleoside in mRNA + S-adenosyl-L-methionine = a 5'-end (N(7)-methyl 5'-triphosphoguanosine)-ribonucleoside in mRNA + S-adenosyl-L-homocysteine. The enzyme catalyses a 5'-end (N(7)-methyl 5'-triphosphoguanosine)-ribonucleoside in mRNA + S-adenosyl-L-methionine = a 5'-end (N(7)-methyl 5'-triphosphoguanosine)-(2'-O-methyl-ribonucleoside) in mRNA + S-adenosyl-L-homocysteine + H(+). Its function is as follows. Plays a role in virus budding by binding to the cell membrane and gathering the viral RNA into a nucleocapsid that forms the core of a mature virus particle. During virus entry, may induce genome penetration into the host cytoplasm after hemifusion induced by the surface proteins. Can migrate to the cell nucleus where it modulates host functions. In terms of biological role, inhibits RNA silencing by interfering with host Dicer. Prevents premature fusion activity of envelope proteins in trans-Golgi by binding to envelope protein E at pH6.0. After virion release in extracellular space, gets dissociated from E dimers. Functionally, acts as a chaperone for envelope protein E during intracellular virion assembly by masking and inactivating envelope protein E fusion peptide. prM is the only viral peptide matured by host furin in the trans-Golgi network probably to avoid catastrophic activation of the viral fusion activity in acidic Golgi compartment prior to virion release. prM-E cleavage is inefficient, and many virions are only partially matured. These uncleaved prM would play a role in immune evasion. Its function is as follows. May play a role in virus budding. Exerts cytotoxic effects by activating a mitochondrial apoptotic pathway through M ectodomain. May display a viroporin activity. In terms of biological role, binds to host cell surface receptor and mediates fusion between viral and cellular membranes. Envelope protein is synthesized in the endoplasmic reticulum in the form of heterodimer with protein prM. They play a role in virion budding in the ER, and the newly formed immature particle is covered with 60 spikes composed of heterodimer between precursor prM and envelope protein E. The virion is transported to the Golgi apparatus where the low pH causes dissociation of PrM-E heterodimers and formation of E homodimers. prM-E cleavage is inefficient, and many virions are only partially matured. These uncleaved prM would play a role in immune evasion. Involved in immune evasion, pathogenesis and viral replication. Once cleaved off the polyprotein, is targeted to three destinations: the viral replication cycle, the plasma membrane and the extracellular compartment. Essential for viral replication. Required for formation of the replication complex and recruitment of other non-structural proteins to the ER-derived membrane structures. Excreted as a hexameric lipoparticle that plays a role against host immune response. Antagonizing the complement function. Binds to the host macrophages and dendritic cells. Inhibits signal transduction originating from Toll-like receptor 3 (TLR3). Functionally, component of the viral RNA replication complex that functions in virion assembly and antagonizes the host immune response. Its function is as follows. Required cofactor for the serine protease function of NS3. May have membrane-destabilizing activity and form viroporins. In terms of biological role, displays three enzymatic activities: serine protease, NTPase and RNA helicase. NS3 serine protease, in association with NS2B, performs its autocleavage and cleaves the polyprotein at dibasic sites in the cytoplasm: C-prM, NS2A-NS2B, NS2B-NS3, NS3-NS4A, NS4A-2K and NS4B-NS5. NS3 RNA helicase binds RNA and unwinds dsRNA in the 3' to 5' direction. Also plays a role in virus assembly. Regulates the ATPase activity of the NS3 helicase activity. NS4A allows NS3 helicase to conserve energy during unwinding. Functionally, functions as a signal peptide for NS4B and is required for the interferon antagonism activity of the latter. Its function is as follows. Induces the formation of ER-derived membrane vesicles where the viral replication takes place. Inhibits interferon (IFN)-induced host STAT1 phosphorylation and nuclear translocation, thereby preventing the establishment of cellular antiviral state by blocking the IFN-alpha/beta pathway. In terms of biological role, replicates the viral (+) and (-) RNA genome, and performs the capping of genomes in the cytoplasm. NS5 methylates viral RNA cap at guanine N-7 and ribose 2'-O positions. Besides its role in RNA genome replication, also prevents the establishment of cellular antiviral state by blocking the interferon-alpha/beta (IFN-alpha/beta) signaling pathway. IFN-I induces binding of NS5 to host IFN-activated transcription factor STAT2, preventing its transcriptional activity. Host TRIM23 is the E3 ligase that interacts with and polyubiquitinates NS5 to promote its binding to STAT2 and trigger IFN-I signaling inhibition. The polypeptide is Genome polyprotein (Aedes aegypti (Yellowfever mosquito)).